Here is a 142-residue protein sequence, read N- to C-terminus: Large ribosomal subunit protein uL11 (142 aa).

It belongs to the universal ribosomal protein uL11 family. In terms of assembly, part of the ribosomal stalk of the 50S ribosomal subunit. Interacts with L10 and the large rRNA to form the base of the stalk. L10 forms an elongated spine to which L12 dimers bind in a sequential fashion forming a multimeric L10(L12)X complex. One or more lysine residues are methylated.

Its function is as follows. Forms part of the ribosomal stalk which helps the ribosome interact with GTP-bound translation factors. The protein is Large ribosomal subunit protein uL11 of Mycobacterium sp. (strain MCS).